Here is a 195-residue protein sequence, read N- to C-terminus: UPF0301 protein CCNA_03506 (195 aa).

Belongs to the UPF0301 (AlgH) family.

The protein is UPF0301 protein CCNA_03506 of Caulobacter vibrioides (strain NA1000 / CB15N) (Caulobacter crescentus).